Reading from the N-terminus, the 734-residue chain is Photosystem I P700 chlorophyll a apoprotein A2 (734 aa).

8 consecutive transmembrane segments (helical) span residues 46-69 (IFAS…FHVA), 135-158 (LYIG…LHLQ), 175-199 (LNHH…HVAI), 273-291 (MAHH…GHMY), 330-353 (LHFQ…QHMY), 369-395 (AALY…IFFI), 417-439 (AIIS…LYVH), and 517-535 (FLVH…LILV). [4Fe-4S] cluster contacts are provided by C559 and C568. 2 consecutive transmembrane segments (helical) span residues 575–596 (AFYL…YWHW) and 643–665 (LSVW…MFLI). The chlorophyll a site is built by H654, M662, and Y670. W671 lines the phylloquinone pocket. The helical transmembrane segment at 707–727 (LVGLAHFSVGYIFTYAAFLIA) threads the bilayer.

This sequence belongs to the PsaA/PsaB family. As to quaternary structure, the PsaA/B heterodimer binds the P700 chlorophyll special pair and subsequent electron acceptors. PSI consists of a core antenna complex that captures photons, and an electron transfer chain that converts photonic excitation into a charge separation. The eukaryotic PSI reaction center is composed of at least 11 subunits. Requires P700 is a chlorophyll a/chlorophyll a' dimer, A0 is one or more chlorophyll a, A1 is one or both phylloquinones and FX is a shared 4Fe-4S iron-sulfur center. as cofactor.

The protein resides in the plastid. The protein localises to the chloroplast thylakoid membrane. It catalyses the reaction reduced [plastocyanin] + hnu + oxidized [2Fe-2S]-[ferredoxin] = oxidized [plastocyanin] + reduced [2Fe-2S]-[ferredoxin]. In terms of biological role, psaA and PsaB bind P700, the primary electron donor of photosystem I (PSI), as well as the electron acceptors A0, A1 and FX. PSI is a plastocyanin-ferredoxin oxidoreductase, converting photonic excitation into a charge separation, which transfers an electron from the donor P700 chlorophyll pair to the spectroscopically characterized acceptors A0, A1, FX, FA and FB in turn. Oxidized P700 is reduced on the lumenal side of the thylakoid membrane by plastocyanin. This Populus alba (White poplar) protein is Photosystem I P700 chlorophyll a apoprotein A2.